Here is an 89-residue protein sequence, read N- to C-terminus: Mu-like prophage FluMu DNA-binding protein Ner (89 aa).

The segment at residues 57–76 (ERLVANAIGVPPEVIWAGRF) is a DNA-binding region (H-T-H motif).

It belongs to the ner transcriptional regulatory family.

Negative regulator of transcription starting from the Pe and Pc promoters of Mu. Also negatively regulates its own gene transcription. The protein is Mu-like prophage FluMu DNA-binding protein Ner (nlp) of Haemophilus influenzae (strain ATCC 51907 / DSM 11121 / KW20 / Rd).